Reading from the N-terminus, the 637-residue chain is MNDWSIDAARAGYNVTHWSQGFYGISDQGEVTVSPDPKNPDHKIGLNELAKDMVKAGVALPVLVRFPQILHHRVNSLCQAFDQAIQKYEYQADYLLVYPIKVNQQKTVVEEILASQASKEVPQLGLEAGSKPELMAVLAMAQKASSVIVCNGYKDNEYIRLALIGEKLGHKVYIVLEKLSELKMVLAESKRLGVKPRLGLRARLAFQGKGKWQASGGEKSKFGLSAAQILTVVDQLKQEDMLDSLQLLHFHLGSQIANIRDIRQGVSEAARFYCELRELGASINCFDVGGGLAVDYDGTRSQSNNSMNYGLSEYANNIVNVLTDICNEYEQPMPRIISESGRHLTAHHAVLITDVIGTEAYQVEEIQPPAEESPQLLHNMWQSWTEISGRADQRALIEIYHDSQSDLQEAQSLFALGQLSLAERAWAEQANLRVCHEVQGLLSTKNRYHRPIIDELNEKLADKFFVNFSLFQSLPDAWGIDQVFPVLPLSGLDKAPERRAVMLDITCDSDGIVDQYVDGQGIETTLPVPAWSAESPYLMGFFMVGAYQEILGDMHNLFGDTNSAVVSIEENGMTNIESVLAGDTVADVLRYVNLDAVDFMRTYEELVNQHIAEEERAQILEELQVGLKGYTYLEDFS.

Lys-101 is subject to N6-(pyridoxal phosphate)lysine. A substrate-binding site is contributed by 286-296 (FDVGGGLAVDY).

It belongs to the Orn/Lys/Arg decarboxylase class-II family. SpeA subfamily. Mg(2+) serves as cofactor. Pyridoxal 5'-phosphate is required as a cofactor.

The catalysed reaction is L-arginine + H(+) = agmatine + CO2. It participates in amine and polyamine biosynthesis; agmatine biosynthesis; agmatine from L-arginine: step 1/1. Catalyzes the biosynthesis of agmatine from arginine. This chain is Biosynthetic arginine decarboxylase, found in Shewanella sp. (strain ANA-3).